The following is a 176-amino-acid chain: Large ribosomal subunit protein uL10 (176 aa).

It belongs to the universal ribosomal protein uL10 family. In terms of assembly, part of the ribosomal stalk of the 50S ribosomal subunit. The N-terminus interacts with L11 and the large rRNA to form the base of the stalk. The C-terminus forms an elongated spine to which L12 dimers bind in a sequential fashion forming a multimeric L10(L12)X complex.

Its function is as follows. Forms part of the ribosomal stalk, playing a central role in the interaction of the ribosome with GTP-bound translation factors. The sequence is that of Large ribosomal subunit protein uL10 from Marinobacter nauticus (strain ATCC 700491 / DSM 11845 / VT8) (Marinobacter aquaeolei).